Reading from the N-terminus, the 273-residue chain is 2-dehydro-3-deoxyphosphooctonate aldolase (273 aa).

This sequence belongs to the KdsA family.

The protein resides in the cytoplasm. The enzyme catalyses D-arabinose 5-phosphate + phosphoenolpyruvate + H2O = 3-deoxy-alpha-D-manno-2-octulosonate-8-phosphate + phosphate. It participates in carbohydrate biosynthesis; 3-deoxy-D-manno-octulosonate biosynthesis; 3-deoxy-D-manno-octulosonate from D-ribulose 5-phosphate: step 2/3. Its pathway is bacterial outer membrane biogenesis; lipopolysaccharide biosynthesis. The sequence is that of 2-dehydro-3-deoxyphosphooctonate aldolase from Geobacter sp. (strain M21).